The chain runs to 418 residues: Putative ion-transport protein YfeO (418 aa).

Transmembrane regions (helical) follow at residues methionine 9–methionine 31, serine 55–serine 77, leucine 90–alanine 112, proline 122–proline 140, tryptophan 147–isoleucine 169, proline 189–proline 211, isoleucine 223–leucine 244, phenylalanine 259–phenylalanine 281, tyrosine 301–glycine 323, valine 343–valine 363, and valine 376–leucine 398.

This sequence belongs to the chloride channel (TC 2.A.49) family.

The protein resides in the cell membrane. The polypeptide is Putative ion-transport protein YfeO (yfeO) (Escherichia coli O6:H1 (strain CFT073 / ATCC 700928 / UPEC)).